Reading from the N-terminus, the 364-residue chain is Dimethylsulfoniopropionate demethylase DmdA (364 aa).

This sequence belongs to the GcvT family. DmdA subfamily.

It carries out the reaction S,S-dimethyl-beta-propiothetin + (6S)-5,6,7,8-tetrahydrofolate = 3-(methylsulfanyl)propanoate + (6S)-5-methyl-5,6,7,8-tetrahydrofolate + H(+). In terms of biological role, involved in the assimilation of dimethylsulphoniopropionate (DMSP), an important compound in the fixation of carbon in marine phytoplankton, by mediating demethylation of dimethylsulfoniopropionate (DMSP) to methyl-mercaptopropionate (MMPA). The intracellular concentration of DMSP is estimated to be 70 mM. This is Dimethylsulfoniopropionate demethylase DmdA from Ruegeria pomeroyi (strain ATCC 700808 / DSM 15171 / DSS-3) (Silicibacter pomeroyi).